The chain runs to 353 residues: Probable dual-specificity RNA methyltransferase RlmN (353 aa).

Glu104 acts as the Proton acceptor in catalysis. In terms of domain architecture, Radical SAM core spans 112–341; sequence DGGRKTICIS…ILNRRSPGKD (230 aa). Cys119 and Cys346 are joined by a disulfide. [4Fe-4S] cluster-binding residues include Cys126, Cys130, and Cys133. Residues 173-174, Ser205, 228-230, and Asn304 each bind S-adenosyl-L-methionine; these read GE and SLN. Residue Cys346 is the S-methylcysteine intermediate of the active site.

The protein belongs to the radical SAM superfamily. RlmN family. [4Fe-4S] cluster is required as a cofactor.

It localises to the cytoplasm. It carries out the reaction adenosine(2503) in 23S rRNA + 2 reduced [2Fe-2S]-[ferredoxin] + 2 S-adenosyl-L-methionine = 2-methyladenosine(2503) in 23S rRNA + 5'-deoxyadenosine + L-methionine + 2 oxidized [2Fe-2S]-[ferredoxin] + S-adenosyl-L-homocysteine. The catalysed reaction is adenosine(37) in tRNA + 2 reduced [2Fe-2S]-[ferredoxin] + 2 S-adenosyl-L-methionine = 2-methyladenosine(37) in tRNA + 5'-deoxyadenosine + L-methionine + 2 oxidized [2Fe-2S]-[ferredoxin] + S-adenosyl-L-homocysteine. Specifically methylates position 2 of adenine 2503 in 23S rRNA and position 2 of adenine 37 in tRNAs. The sequence is that of Probable dual-specificity RNA methyltransferase RlmN from Leptospira interrogans serogroup Icterohaemorrhagiae serovar Lai (strain 56601).